The following is a 305-amino-acid chain: Mas-related G-protein coupled receptor member A2B (305 aa).

Residues 1 to 17 lie on the Extracellular side of the membrane; that stretch reads MDETLPGSINIRILIPK. Residues 18-38 form a helical membrane-spanning segment; it reads LMIIIFGLVGLMGNAIVFWLL. Over 39–53 the chain is Cytoplasmic; it reads GFHLRRNAFSVYILN. The helical transmembrane segment at 54–74 threads the bilayer; that stretch reads LALADFLFLLSSIIASTLFLL. At 75-78 the chain is on the extracellular side; sequence KVSY. The helical transmembrane segment at 79-99 threads the bilayer; that stretch reads LSIIFHLCFNTIMMVVYITGI. Residues 100-132 are Cytoplasmic-facing; the sequence is SMLSAISTECCLSVLCPTWYRCHRPVHTSTVMC. A helical membrane pass occupies residues 133-153; it reads AVIWVLSLLICILNSYFCAVL. At 154-167 the chain is on the extracellular side; it reads HTRYDNDNECLATN. A helical membrane pass occupies residues 168–188; sequence IFTASYMIFLLVVLCLSSLAL. Topologically, residues 189–207 are cytoplasmic; it reads LARLFCGAGQMKLTRFHVT. The helical transmembrane segment at 208 to 228 threads the bilayer; the sequence is ILLTLLVFLLCGLPFVIYCIL. Residues 229–244 lie on the Extracellular side of the membrane; it reads LFKIKDDFHVLDVNFY. The chain crosses the membrane as a helical span at residues 245 to 265; it reads LALEVLTAINSCANPIIYFFV. Residues 266–305 lie on the Cytoplasmic side of the membrane; it reads GSFRHQLKHQTLKMVLQSALQDTPETAENMVEMSSNKAEP.

Belongs to the G-protein coupled receptor 1 family. Mas subfamily. Expressed in a subset of sensory neurons that includes nociceptors. Expressed in the subclass of non-peptidergic sensory neurons that are IB4(+) and VR1(-).

Its subcellular location is the cell membrane. Its function is as follows. Orphan receptor. May be a receptor for RFamide-family neuropeptides such as NPFF and NPAF, which are analgesic in vivo. May regulate nociceptor function and/or development, including the sensation or modulation of pain. The polypeptide is Mas-related G-protein coupled receptor member A2B (Mus musculus (Mouse)).